The chain runs to 80 residues: Ubiquitin-like protein NEDD8-like protein 2 (80 aa).

This sequence belongs to the ubiquitin family.

The protein is Ubiquitin-like protein NEDD8-like protein 2 (nedd8l2) of Dictyostelium discoideum (Social amoeba).